A 338-amino-acid chain; its full sequence is Glycerol-3-phosphate dehydrogenase [NAD(P)+] (338 aa).

Residues W11, R30, and K107 each contribute to the NADPH site. The sn-glycerol 3-phosphate site is built by K107, G140, and S142. A144 contacts NADPH. Sn-glycerol 3-phosphate-binding residues include K195, D248, S258, R259, and N260. The active-site Proton acceptor is the K195. R259 lines the NADPH pocket. 2 residues coordinate NADPH: V283 and E285.

This sequence belongs to the NAD-dependent glycerol-3-phosphate dehydrogenase family.

The protein localises to the cytoplasm. It catalyses the reaction sn-glycerol 3-phosphate + NAD(+) = dihydroxyacetone phosphate + NADH + H(+). The catalysed reaction is sn-glycerol 3-phosphate + NADP(+) = dihydroxyacetone phosphate + NADPH + H(+). The protein operates within membrane lipid metabolism; glycerophospholipid metabolism. Catalyzes the reduction of the glycolytic intermediate dihydroxyacetone phosphate (DHAP) to sn-glycerol 3-phosphate (G3P), the key precursor for phospholipid synthesis. This is Glycerol-3-phosphate dehydrogenase [NAD(P)+] from Ralstonia nicotianae (strain ATCC BAA-1114 / GMI1000) (Ralstonia solanacearum).